We begin with the raw amino-acid sequence, 301 residues long: Lipoyl synthase (301 aa).

The [4Fe-4S] cluster site is built by cysteine 53, cysteine 58, cysteine 64, cysteine 79, cysteine 83, cysteine 86, and serine 290. The 215-residue stretch at 65-279 (WSRKTATYML…RIYGKSIGFK (215 aa)) folds into the Radical SAM core domain.

The protein belongs to the radical SAM superfamily. Lipoyl synthase family. It depends on [4Fe-4S] cluster as a cofactor.

The protein localises to the cytoplasm. It catalyses the reaction [[Fe-S] cluster scaffold protein carrying a second [4Fe-4S](2+) cluster] + N(6)-octanoyl-L-lysyl-[protein] + 2 oxidized [2Fe-2S]-[ferredoxin] + 2 S-adenosyl-L-methionine + 4 H(+) = [[Fe-S] cluster scaffold protein] + N(6)-[(R)-dihydrolipoyl]-L-lysyl-[protein] + 4 Fe(3+) + 2 hydrogen sulfide + 2 5'-deoxyadenosine + 2 L-methionine + 2 reduced [2Fe-2S]-[ferredoxin]. It functions in the pathway protein modification; protein lipoylation via endogenous pathway; protein N(6)-(lipoyl)lysine from octanoyl-[acyl-carrier-protein]: step 2/2. Its function is as follows. Catalyzes the radical-mediated insertion of two sulfur atoms into the C-6 and C-8 positions of the octanoyl moiety bound to the lipoyl domains of lipoate-dependent enzymes, thereby converting the octanoylated domains into lipoylated derivatives. In Leptospira interrogans serogroup Icterohaemorrhagiae serovar copenhageni (strain Fiocruz L1-130), this protein is Lipoyl synthase.